A 317-amino-acid polypeptide reads, in one-letter code: tRNA pseudouridine synthase B (317 aa).

Asp-47 (nucleophile) is an active-site residue.

The protein belongs to the pseudouridine synthase TruB family. Type 1 subfamily.

The catalysed reaction is uridine(55) in tRNA = pseudouridine(55) in tRNA. Functionally, responsible for synthesis of pseudouridine from uracil-55 in the psi GC loop of transfer RNAs. The protein is tRNA pseudouridine synthase B of Shewanella woodyi (strain ATCC 51908 / MS32).